The sequence spans 142 residues: Deoxyuridine 5'-triphosphate nucleotidohydrolase (142 aa).

Substrate-binding positions include 62–64 (RSG), Asn75, and 79–81 (TID).

This sequence belongs to the dUTPase family. Mg(2+) serves as cofactor.

The catalysed reaction is dUTP + H2O = dUMP + diphosphate + H(+). Its pathway is pyrimidine metabolism; dUMP biosynthesis; dUMP from dCTP (dUTP route): step 2/2. Functionally, this enzyme is involved in nucleotide metabolism: it produces dUMP, the immediate precursor of thymidine nucleotides and it decreases the intracellular concentration of dUTP so that uracil cannot be incorporated into DNA. The polypeptide is Deoxyuridine 5'-triphosphate nucleotidohydrolase (Trichodesmium erythraeum (strain IMS101)).